The chain runs to 291 residues: MIIDELYETVNKKGNVCVGLDTALSYIPESMRESHENVEDCIFEFNRTIIDSTLDAAACYKVQIAYYEALGIEGLRAYSKTLKYIKDKKALSIADIKRGDIAKTAEMYAKAHFEGEFESDFVTLNPYMGFDTIEPYLPYVKNNNKGLFILIRTSNKGAKDLQYISTRKNTKLYNIVGKKVSSLGEKYMGNCGYSSLGGVMGCTHQEEGIKLRKKLKNIFFLIPGYGAQGGTAEDISAYLKRGNGGVVNSSRGILLAYKKEEDGFKKYGECARQECVKIRDDILKISQNKNS.

Lys-97 functions as the Proton donor in the catalytic mechanism.

It belongs to the OMP decarboxylase family. Type 2 subfamily.

It carries out the reaction orotidine 5'-phosphate + H(+) = UMP + CO2. Its pathway is pyrimidine metabolism; UMP biosynthesis via de novo pathway; UMP from orotate: step 2/2. This Clostridium kluyveri (strain ATCC 8527 / DSM 555 / NBRC 12016 / NCIMB 10680 / K1) protein is Orotidine 5'-phosphate decarboxylase.